The sequence spans 219 residues: Thiamine-phosphate synthase (219 aa).

Residues 48–52 (QFRQK) and N84 contribute to the 4-amino-2-methyl-5-(diphosphooxymethyl)pyrimidine site. Positions 85 and 104 each coordinate Mg(2+). 4-amino-2-methyl-5-(diphosphooxymethyl)pyrimidine is bound at residue S123. 150–152 (TPS) provides a ligand contact to 2-[(2R,5Z)-2-carboxy-4-methylthiazol-5(2H)-ylidene]ethyl phosphate. 4-amino-2-methyl-5-(diphosphooxymethyl)pyrimidine is bound at residue K153. Residues G181 and 199 to 200 (IS) contribute to the 2-[(2R,5Z)-2-carboxy-4-methylthiazol-5(2H)-ylidene]ethyl phosphate site.

The protein belongs to the thiamine-phosphate synthase family. Mg(2+) serves as cofactor.

It catalyses the reaction 2-[(2R,5Z)-2-carboxy-4-methylthiazol-5(2H)-ylidene]ethyl phosphate + 4-amino-2-methyl-5-(diphosphooxymethyl)pyrimidine + 2 H(+) = thiamine phosphate + CO2 + diphosphate. The enzyme catalyses 2-(2-carboxy-4-methylthiazol-5-yl)ethyl phosphate + 4-amino-2-methyl-5-(diphosphooxymethyl)pyrimidine + 2 H(+) = thiamine phosphate + CO2 + diphosphate. It carries out the reaction 4-methyl-5-(2-phosphooxyethyl)-thiazole + 4-amino-2-methyl-5-(diphosphooxymethyl)pyrimidine + H(+) = thiamine phosphate + diphosphate. It functions in the pathway cofactor biosynthesis; thiamine diphosphate biosynthesis; thiamine phosphate from 4-amino-2-methyl-5-diphosphomethylpyrimidine and 4-methyl-5-(2-phosphoethyl)-thiazole: step 1/1. In terms of biological role, condenses 4-methyl-5-(beta-hydroxyethyl)thiazole monophosphate (THZ-P) and 2-methyl-4-amino-5-hydroxymethyl pyrimidine pyrophosphate (HMP-PP) to form thiamine monophosphate (TMP). The polypeptide is Thiamine-phosphate synthase (Helicobacter pylori (strain ATCC 700392 / 26695) (Campylobacter pylori)).